We begin with the raw amino-acid sequence, 132 residues long: Putative F-box protein At4g05620 (132 aa).

The region spanning Gln17–Arg63 is the F-box domain.

The sequence is that of Putative F-box protein At4g05620 from Arabidopsis thaliana (Mouse-ear cress).